Here is a 153-residue protein sequence, read N- to C-terminus: Aspartate carbamoyltransferase regulatory chain (153 aa).

The Zn(2+) site is built by cysteine 109, cysteine 114, cysteine 138, and cysteine 141.

The protein belongs to the PyrI family. Contains catalytic and regulatory chains. It depends on Zn(2+) as a cofactor.

Functionally, involved in allosteric regulation of aspartate carbamoyltransferase. This chain is Aspartate carbamoyltransferase regulatory chain, found in Vibrio campbellii (strain ATCC BAA-1116).